A 597-amino-acid chain; its full sequence is NADH-quinone oxidoreductase subunits H/I (597 aa).

The interval 1–405 (MPDLSLFGHD…FPTPPVPADA (405 aa)) is NADH-quinone oxidoreductase subunit H. The next 9 helical transmembrane spans lie at 12–32 (FWLVVAKSVFLFVYIILIPLV), 82–102 (PIYLLAPVVSVIPAFMAFAVI), 124–144 (VGVLYILAITSIGVYGIVLAG), 170–190 (MALCFAAVFLHAGTMATSGIV), 195–215 (PTWFVFLLLPSFLIYCVSMVG), 260–280 (ALATTLFLGGWSAPWPFNLIP), 286–306 (WWGLLWFTAKVWTFMFVFVWL), 318–338 (FMRLGWQLLIPVSLLWVMLVA), and 351–371 (ATGAQVVVGVALTAAMIGLFL). The segment at 406 to 597 (HRVDNPKGGL…APAGAKGGAR (192 aa)) is NADH-quinone oxidoreductase subunit I. 4Fe-4S ferredoxin-type domains lie at 455–485 (LNRHPDGLEKCIGCELCAWACPADAIYVEGA) and 501–530 (RVYQINYLRCIGCGLCIEACPTRALTMTND). [4Fe-4S] cluster contacts are provided by Cys465, Cys468, Cys471, Cys475, Cys510, Cys513, Cys516, and Cys520.

In the N-terminal section; belongs to the complex I subunit 1 family. The protein in the C-terminal section; belongs to the complex I 23 kDa subunit family. As to quaternary structure, NDH-1 is composed of 13 different subunits. Subunits NuoA, H/I, J, K, L, M, N constitute the membrane sector of the complex. [4Fe-4S] cluster is required as a cofactor.

The protein localises to the cell membrane. It carries out the reaction a quinone + NADH + 5 H(+)(in) = a quinol + NAD(+) + 4 H(+)(out). NDH-1 shuttles electrons from NADH, via FMN and iron-sulfur (Fe-S) centers, to quinones in the respiratory chain. The immediate electron acceptor for the enzyme in this species is believed to be ubiquinone. Couples the redox reaction to proton translocation (for every two electrons transferred, four hydrogen ions are translocated across the cytoplasmic membrane), and thus conserves the redox energy in a proton gradient. This subunit may bind ubiquinone. The polypeptide is NADH-quinone oxidoreductase subunits H/I (nuoH/I) (Nocardia farcinica (strain IFM 10152)).